The chain runs to 188 residues: Casparian strip membrane protein 1 (188 aa).

Residues 1–24 (MKAGALELGHASKTTKSGVNRGMS) are Cytoplasmic-facing. A helical transmembrane segment spans residues 25-45 (ILDLFIRIIAIIATLGSAIAM). Topologically, residues 46-72 (GTTNETLPFFTQFVRFKAKYSDLPTFT) are extracellular. The N-linked (GlcNAc...) asparagine glycan is linked to N49. A helical transmembrane segment spans residues 73 to 93 (FFVVANAIVSAYLVLSLGLSI). Over 94-105 (YHIMRSRAQATR) the chain is Cytoplasmic. A helical membrane pass occupies residues 106 to 126 (IALIFFDAAMLGLLTGGASAS). At 127-159 (AAIVYLAHKGNRKTNWFPICQQYDSFCHRTSGS) the chain is on the extracellular side. Residues 160-180 (LVGSFAGSVLIILLIFLSAIA) form a helical membrane-spanning segment. The Cytoplasmic segment spans residues 181–188 (LSRQSLNH).

This sequence belongs to the Casparian strip membrane proteins (CASP) family. Homodimer and heterodimers.

The protein localises to the cell membrane. In terms of biological role, regulates membrane-cell wall junctions and localized cell wall deposition. Required for establishment of the Casparian strip membrane domain (CSD) and the subsequent formation of Casparian strips, a cell wall modification of the root endodermis that determines an apoplastic barrier between the intraorganismal apoplasm and the extraorganismal apoplasm and prevents lateral diffusion. This Solanum tuberosum (Potato) protein is Casparian strip membrane protein 1.